Consider the following 441-residue polypeptide: tRNA-2-methylthio-N(6)-dimethylallyladenosine synthase (441 aa).

One can recognise an MTTase N-terminal domain in the interval 2–117 (KGLYIKSYGC…LPELLVKAHR (116 aa)). [4Fe-4S] cluster contacts are provided by Cys11, Cys47, Cys80, Cys157, Cys161, and Cys164. The 232-residue stretch at 143-374 (KNQETSAFIS…QKLLREQQLA (232 aa)) folds into the Radical SAM core domain.

Belongs to the methylthiotransferase family. MiaB subfamily. Monomer. [4Fe-4S] cluster serves as cofactor.

It localises to the cytoplasm. The catalysed reaction is N(6)-dimethylallyladenosine(37) in tRNA + (sulfur carrier)-SH + AH2 + 2 S-adenosyl-L-methionine = 2-methylsulfanyl-N(6)-dimethylallyladenosine(37) in tRNA + (sulfur carrier)-H + 5'-deoxyadenosine + L-methionine + A + S-adenosyl-L-homocysteine + 2 H(+). Catalyzes the methylthiolation of N6-(dimethylallyl)adenosine (i(6)A), leading to the formation of 2-methylthio-N6-(dimethylallyl)adenosine (ms(2)i(6)A) at position 37 in tRNAs that read codons beginning with uridine. This is tRNA-2-methylthio-N(6)-dimethylallyladenosine synthase from Ehrlichia canis (strain Jake).